Here is a 495-residue protein sequence, read N- to C-terminus: Cysteine-rich secretory protein LCCL domain-containing 2 (495 aa).

The signal sequence occupies residues 1–22; it reads MSCLLNNMVLMGLALLVCGVQA. Asparagine 27 is a glycosylation site (N-linked (GlcNAc...) asparagine). The region spanning 60 to 200 is the SCP domain; the sequence is LMLHNKLRGQ…ENAVYLVCNY (141 aa). LCCL domains lie at 282–377 and 383–486; these read MTQV…SSSF and TETA…QNGN. Intrachain disulfides connect cysteine 288–cysteine 306, cysteine 310–cysteine 330, cysteine 389–cysteine 411, and cysteine 415–cysteine 438.

In terms of assembly, binds to heparin, dermatan sulfate and chondroitin sulfate. In terms of tissue distribution, present in kidney renal tubules (at protein level).

It is found in the secreted. Promotes matrix assembly. The protein is Cysteine-rich secretory protein LCCL domain-containing 2 (Crispld2) of Mus musculus (Mouse).